Reading from the N-terminus, the 258-residue chain is Hemin import ATP-binding protein HmuV (258 aa).

Residues 2–242 enclose the ABC transporter domain; it reads LTAEKLCVER…SKIEELYDFP (241 aa). 34-41 lines the ATP pocket; sequence GANGAGKS.

The protein belongs to the ABC transporter superfamily. Heme (hemin) importer (TC 3.A.1.14.5) family. As to quaternary structure, the complex is composed of two ATP-binding proteins (HmuV), two transmembrane proteins (HmuU) and a solute-binding protein (HmuT).

It is found in the cell inner membrane. Its function is as follows. Part of the ABC transporter complex HmuTUV involved in hemin import. Responsible for energy coupling to the transport system. The chain is Hemin import ATP-binding protein HmuV from Hydrogenovibrio crunogenus (strain DSM 25203 / XCL-2) (Thiomicrospira crunogena).